Reading from the N-terminus, the 241-residue chain is Sugar fermentation stimulation protein homolog (241 aa).

It belongs to the SfsA family.

This chain is Sugar fermentation stimulation protein homolog, found in Nostoc punctiforme (strain ATCC 29133 / PCC 73102).